Here is a 390-residue protein sequence, read N- to C-terminus: Large ribosomal subunit protein mL44 (390 aa).

Residues 1–59 (MGIVLKRAIAAGMKPFPNSTWHWSRTIRPFSQHLSSTCFLQQSSRFTSKRYLHLSTLTQ) constitute a mitochondrion transit peptide. Positions 139-205 (AFVNTVPTNK…LAHIAKYWGI (67 aa)) constitute an RNase III domain. Residues 302–372 (QPTRELAMLC…ATDALMKWYC (71 aa)) form the DRBM domain.

Belongs to the ribonuclease III family. Mitochondrion-specific ribosomal protein mL44 subfamily. In terms of assembly, component of the mitochondrial large ribosomal subunit (mt-LSU). Mature yeast 74S mitochondrial ribosomes consist of a small (37S) and a large (54S) subunit. The 37S small subunit contains a 15S ribosomal RNA (15S mt-rRNA) and 34 different proteins. The 54S large subunit contains a 21S rRNA (21S mt-rRNA) and 46 different proteins. mL44 forms a heterodimer with mL57 and stabilizes rRNA expansion segments 1/2 at a membrane-facing protuberance close to the point of attachment of the ribosome to the translocon in the membrane.

It is found in the mitochondrion. Component of the mitochondrial ribosome (mitoribosome), a dedicated translation machinery responsible for the synthesis of mitochondrial genome-encoded proteins, including at least some of the essential transmembrane subunits of the mitochondrial respiratory chain. The mitoribosomes are attached to the mitochondrial inner membrane and translation products are cotranslationally integrated into the membrane. The chain is Large ribosomal subunit protein mL44 (MRPL3) from Saccharomyces cerevisiae (strain ATCC 204508 / S288c) (Baker's yeast).